A 508-amino-acid polypeptide reads, in one-letter code: Glycerol kinase (508 aa).

Threonine 14 provides a ligand contact to ADP. Positions 14, 15, and 16 each coordinate ATP. Threonine 14 is a sn-glycerol 3-phosphate binding site. Arginine 18 is a binding site for ADP. Residues arginine 84, glutamate 85, and tyrosine 136 each contribute to the sn-glycerol 3-phosphate site. The glycerol site is built by arginine 84, glutamate 85, and tyrosine 136. The residue at position 232 (histidine 232) is a Phosphohistidine; by HPr. Residue aspartate 246 participates in sn-glycerol 3-phosphate binding. Glycerol-binding residues include aspartate 246 and glutamine 247. ADP is bound by residues threonine 268 and glycine 311. Residues threonine 268, glycine 311, glutamine 315, and glycine 412 each coordinate ATP. ADP-binding residues include glycine 412 and asparagine 416.

Belongs to the FGGY kinase family. As to quaternary structure, homotetramer and homodimer (in equilibrium). Post-translationally, the phosphoenolpyruvate-dependent sugar phosphotransferase system (PTS), including enzyme I, and histidine-containing protein (HPr) are required for the phosphorylation, which leads to the activation of the enzyme.

The enzyme catalyses glycerol + ATP = sn-glycerol 3-phosphate + ADP + H(+). It functions in the pathway polyol metabolism; glycerol degradation via glycerol kinase pathway; sn-glycerol 3-phosphate from glycerol: step 1/1. With respect to regulation, activated by phosphorylation and inhibited by fructose 1,6-bisphosphate (FBP). Its function is as follows. Key enzyme in the regulation of glycerol uptake and metabolism. Catalyzes the phosphorylation of glycerol to yield sn-glycerol 3-phosphate. The polypeptide is Glycerol kinase (Streptococcus pyogenes serotype M3 (strain ATCC BAA-595 / MGAS315)).